The following is a 28-amino-acid chain: Dermaseptin-SP1 (28 aa).

As to expression, expressed by the skin glands.

The protein resides in the secreted. In terms of biological role, probable antimicrobial peptide which stimulates insulin-release in glucose-responsive BRIN-BD 11 cells. The sequence is that of Dermaseptin-SP1 from Agalychnis spurrelli (Gliding leaf frog).